The primary structure comprises 292 residues: Acetylglutamate kinase (292 aa).

Residues Gly-64–Gly-65, Arg-86, and Asn-190 each bind substrate.

The protein belongs to the acetylglutamate kinase family. ArgB subfamily.

It localises to the cytoplasm. The catalysed reaction is N-acetyl-L-glutamate + ATP = N-acetyl-L-glutamyl 5-phosphate + ADP. It functions in the pathway amino-acid biosynthesis; L-arginine biosynthesis; N(2)-acetyl-L-ornithine from L-glutamate: step 2/4. Catalyzes the ATP-dependent phosphorylation of N-acetyl-L-glutamate. The polypeptide is Acetylglutamate kinase (Geobacter sulfurreducens (strain ATCC 51573 / DSM 12127 / PCA)).